A 302-amino-acid chain; its full sequence is uncharacterized protein (302 aa).

Residues 1-22 form the signal peptide; that stretch reads MLVVFKRLGFIVSIFSLTFLSA. Residue C23 is the site of N-palmitoyl cysteine attachment. Residue C23 is the site of S-diacylglycerol cysteine attachment.

The protein belongs to the MG067/MG068/MG395 family.

The protein resides in the cell membrane. This is an uncharacterized protein from Mycoplasma pneumoniae (strain ATCC 29342 / M129 / Subtype 1) (Mycoplasmoides pneumoniae).